Here is a 363-residue protein sequence, read N- to C-terminus: Peroxidase (363 aa).

An N-terminal signal peptide occupies residues 1–20 (MKLSLLSTFAAVIIGALALP). Residue Gln-21 is modified to Pyrrolidone carboxylic acid. Disulfide bonds link Cys-31–Cys-43, Cys-42–Cys-312, Cys-62–Cys-148, and Cys-276–Cys-341. His-75 acts as the Proton acceptor in catalysis. Ca(2+) contacts are provided by Asp-76, Gly-94, Asp-96, and Ser-98. N-linked (GlcNAc...) (high mannose) asparagine glycosylation is present at Asn-162. His-203 is a heme b binding site. 5 residues coordinate Ca(2+): Ser-204, Asp-221, Thr-223, Val-226, and Asp-228. Ser-358 carries O-linked (Man...) serine glycosylation.

The protein belongs to the peroxidase family. Ligninase subfamily. Requires Ca(2+) as cofactor. Heme b serves as cofactor.

It is found in the secreted. It carries out the reaction 2 a phenolic donor + H2O2 = 2 a phenolic radical donor + 2 H2O. The chain is Peroxidase (CIP1) from Coprinopsis cinerea (strain Okayama-7 / 130 / ATCC MYA-4618 / FGSC 9003) (Inky cap fungus).